The following is a 136-amino-acid chain: Histone H3 (136 aa).

The interval 1-42 (MARTKQTARKSTGGKAPRKQIAAKAARKAAPSTGGVKKPHRY) is disordered. Residue lysine 5 is modified to N6,N6,N6-trimethyllysine; alternate. Lysine 5 is modified (N6,N6-dimethyllysine; alternate). Lysine 5 and lysine 10 each carry N6-methyllysine; alternate. Lysine 10 bears the N6-acetyllysine; alternate mark. Residue serine 11 is modified to Phosphoserine. An N6,N6-dimethyllysine; alternate modification is found at lysine 15. Residues lysine 15, lysine 19, lysine 24, lysine 28, and lysine 37 each carry the N6-acetyllysine; alternate modification. 4 positions are modified to N6-methyllysine; alternate: lysine 19, lysine 24, lysine 28, and lysine 37. Positions 19-31 (KQIAAKAARKAAP) are enriched in low complexity. N6,N6,N6-trimethyllysine; alternate occurs at positions 28 and 37. Lysine 28 and lysine 37 each carry N6,N6-dimethyllysine; alternate. An N6-acetyllysine mark is found at lysine 57 and lysine 65. At lysine 80 the chain carries N6,N6,N6-trimethyllysine; alternate. Lysine 80 is modified (N6,N6-dimethyllysine; alternate). Lysine 80 carries the N6-methyllysine; alternate modification.

Belongs to the histone H3 family. In terms of assembly, the nucleosome is a histone octamer containing two molecules each of H2A, H2B, H3 and H4 assembled in one H3-H4 heterotetramer and two H2A-H2B heterodimers. The octamer wraps approximately 147 bp of DNA. In terms of processing, phosphorylated to form H3S10ph. H3S10ph promotes subsequent H3K14ac formation and is required for transcriptional activation through TBP recruitment to the promoters. Mono-, di- and trimethylated by the COMPASS complex to form H3K4me1/2/3. H3K4me activates gene expression by regulating transcription elongation and plays a role in telomere length maintenance. H3K4me enrichment correlates with transcription levels, and occurs in a 5' to 3' gradient with H3K4me3 enrichment at the 5'-end of genes, shifting to H3K4me2 and then H3K4me1. Methylated by SET2 to form H3K36me. H3K36me represses gene expression. Methylated by DOT1 to form H3K79me. H3K79me is required for association of SIR proteins with telomeric regions and for telomeric silencing. The COMPASS-mediated formation of H3K4me2/3 and the DOT1-mediated formation of H3K79me require H2BK123ub1. Post-translationally, acetylation of histone H3 leads to transcriptional activation. H3K14ac formation by GCN5 is promoted by H3S10ph. H3K14ac can also be formed by ESA1. H3K56ac formation occurs predominantly in newly synthesized H3 molecules during G1, S and G2/M of the cell cycle and may be involved in DNA repair.

The protein localises to the nucleus. Its subcellular location is the chromosome. Core component of nucleosome. Nucleosomes wrap and compact DNA into chromatin, limiting DNA accessibility to the cellular machineries which require DNA as a template. Histones thereby play a central role in transcription regulation, DNA repair, DNA replication and chromosomal stability. DNA accessibility is regulated via a complex set of post-translational modifications of histones, also called histone code, and nucleosome remodeling. The protein is Histone H3 (HHT1) of Coccidioides immitis (strain RS) (Valley fever fungus).